Here is an 89-residue protein sequence, read N- to C-terminus: Small ribosomal subunit protein uS14 (89 aa).

Belongs to the universal ribosomal protein uS14 family. In terms of assembly, part of the 30S ribosomal subunit. Contacts proteins S3 and S10.

In terms of biological role, binds 16S rRNA, required for the assembly of 30S particles and may also be responsible for determining the conformation of the 16S rRNA at the A site. The polypeptide is Small ribosomal subunit protein uS14 (Chlorobaculum parvum (strain DSM 263 / NCIMB 8327) (Chlorobium vibrioforme subsp. thiosulfatophilum)).